The sequence spans 1242 residues: Protein jagged-1a (1242 aa).

The signal sequence occupies residues Met-1–Ala-28. The Extracellular portion of the chain corresponds to Ser-29–Tyr-1070. Asn-141 is a glycosylation site (N-linked (GlcNAc...) asparagine). Residues Val-186–Cys-230 form the DSL domain. 2 disulfides stabilise this stretch: Cys-188–Cys-197 and Cys-201–Cys-213. N-linked (GlcNAc...) asparagine glycosylation is present at Asn-218. 39 disulfides stabilise this stretch: Cys-221/Cys-230, Cys-235/Cys-246, Cys-239/Cys-252, Cys-254/Cys-263, Cys-266/Cys-277, Cys-272/Cys-283, Cys-285/Cys-294, Cys-301/Cys-313, Cys-307/Cys-323, Cys-325/Cys-334, Cys-341/Cys-352, Cys-346/Cys-361, Cys-363/Cys-372, Cys-379/Cys-390, Cys-384/Cys-399, Cys-401/Cys-410, Cys-417/Cys-428, Cys-422/Cys-437, Cys-439/Cys-448, Cys-455/Cys-465, Cys-459/Cys-474, Cys-476/Cys-485, Cys-492/Cys-503, Cys-497/Cys-512, Cys-514/Cys-523, Cys-530/Cys-541, Cys-535/Cys-550, Cys-552/Cys-561, Cys-600/Cys-618, Cys-620/Cys-629, Cys-636/Cys-647, Cys-641/Cys-656, Cys-658/Cys-667, Cys-674/Cys-685, Cys-679/Cys-694, Cys-696/Cys-705, Cys-712/Cys-723, Cys-717/Cys-732, and Cys-734/Cys-743. Residues Asn-231–Asp-264 enclose the EGF-like 1 domain. Positions Gln-265–Asp-295 constitute an EGF-like 2; atypical domain. 2 consecutive EGF-like domains span residues Asp-297–Glu-335 and Ala-337–Asn-373. The region spanning Asn-375–Leu-411 is the EGF-like 5; calcium-binding domain. The N-linked (GlcNAc...) asparagine glycan is linked to Asn-385. One can recognise an EGF-like 6; calcium-binding domain in the interval Asp-413–Asp-449. The 36-residue stretch at Asn-451 to Glu-486 folds into the EGF-like 7; calcium-binding domain. An EGF-like 8; calcium-binding domain is found at Asp-488–Gln-524. EGF-like domains follow at residues Asp-526–Ser-562 and Val-575–His-630. N-linked (GlcNAc...) asparagine glycosylation is present at Asn-560. In terms of domain architecture, EGF-like 11; calcium-binding spans Asn-632–Glu-668. The EGF-like 12; calcium-binding domain occupies Asn-670–His-706. 2 EGF-like domains span residues Arg-708–Asn-744 and Lys-747–Ser-783. Asn-748 carries an N-linked (GlcNAc...) asparagine glycan. Intrachain disulfides connect Cys-751–Cys-762, Cys-756–Cys-771, Cys-773–Cys-782, Cys-789–Cys-800, Cys-794–Cys-809, Cys-811–Cys-820, Cys-827–Cys-838, Cys-832–Cys-847, and Cys-849–Cys-858. The region spanning Asn-785–Arg-821 is the EGF-like 15; calcium-binding domain. Residues Asn-823–Gln-859 form the EGF-like 16; calcium-binding domain. The EGF-like 17 domain maps to Thr-917–Ala-959. Asn-960, Asn-991, and Asn-1046 each carry an N-linked (GlcNAc...) asparagine glycan. A helical membrane pass occupies residues Met-1071–Ile-1095. Over Arg-1096–Val-1242 the chain is Cytoplasmic. A disordered region spans residues Arg-1191–Val-1242. A compositionally biased stretch (basic and acidic residues) spans Asn-1210–Gln-1232.

The protein resides in the membrane. Its subcellular location is the cell membrane. Ligand for multiple Notch receptors and involved in the mediation of Notch signaling. Seems to be involved in cell-fate decisions. This is Protein jagged-1a (jag1a) from Danio rerio (Zebrafish).